Here is a 351-residue protein sequence, read N- to C-terminus: Uroporphyrinogen decarboxylase (351 aa).

Substrate-binding positions include 25–29 (RQAGR), Asp-74, Tyr-151, Ser-206, and His-325.

The protein belongs to the uroporphyrinogen decarboxylase family. As to quaternary structure, homodimer.

Its subcellular location is the cytoplasm. It catalyses the reaction uroporphyrinogen III + 4 H(+) = coproporphyrinogen III + 4 CO2. It participates in porphyrin-containing compound metabolism; protoporphyrin-IX biosynthesis; coproporphyrinogen-III from 5-aminolevulinate: step 4/4. Functionally, catalyzes the decarboxylation of four acetate groups of uroporphyrinogen-III to yield coproporphyrinogen-III. The polypeptide is Uroporphyrinogen decarboxylase (Pelodictyon phaeoclathratiforme (strain DSM 5477 / BU-1)).